We begin with the raw amino-acid sequence, 217 residues long: N-(5'-phosphoribosyl)anthranilate isomerase (217 aa).

This sequence belongs to the TrpF family.

It catalyses the reaction N-(5-phospho-beta-D-ribosyl)anthranilate = 1-(2-carboxyphenylamino)-1-deoxy-D-ribulose 5-phosphate. It participates in amino-acid biosynthesis; L-tryptophan biosynthesis; L-tryptophan from chorismate: step 3/5. The protein is N-(5'-phosphoribosyl)anthranilate isomerase of Acaryochloris marina (strain MBIC 11017).